Here is a 201-residue protein sequence, read N- to C-terminus: Probable GTP-binding protein EngB (201 aa).

Positions 21-191 (AAPQIILAGR…WNLLDVTAIP (171 aa)) constitute an EngB-type G domain. GTP is bound by residues 29-36 (GRSNVGKS), 56-60 (GKTRS), 75-78 (DLPG), 142-145 (TKSD), and 168-172 (ICVSS). Positions 36 and 58 each coordinate Mg(2+).

The protein belongs to the TRAFAC class TrmE-Era-EngA-EngB-Septin-like GTPase superfamily. EngB GTPase family. Mg(2+) is required as a cofactor.

Necessary for normal cell division and for the maintenance of normal septation. This Maridesulfovibrio salexigens (strain ATCC 14822 / DSM 2638 / NCIMB 8403 / VKM B-1763) (Desulfovibrio salexigens) protein is Probable GTP-binding protein EngB.